Reading from the N-terminus, the 91-residue chain is MSFDRKQVPNWRPGYRFQYEPAQKGHVLLYPEGMIKLNDSASLIGGLIDGKRDVNAIITELEQQFPGVPEVADDIEQFMEVARGEHWITLA.

The protein belongs to the PqqD family. Monomer. Interacts with PqqE.

The protein operates within cofactor biosynthesis; pyrroloquinoline quinone biosynthesis. Functionally, functions as a PqqA binding protein and presents PqqA to PqqE, in the pyrroloquinoline quinone (PQQ) biosynthetic pathway. The protein is PqqA binding protein of Pseudomonas putida (strain W619).